Consider the following 429-residue polypeptide: Adenylosuccinate synthetase (429 aa).

Residues 12–18 and 40–42 contribute to the GTP site; these read GDEGKGK and GHT. Aspartate 13 (proton acceptor) is an active-site residue. Mg(2+)-binding residues include aspartate 13 and glycine 40. IMP-binding positions include 13 to 16, 38 to 41, threonine 129, arginine 143, glutamine 223, threonine 238, and arginine 302; these read DEGK and NAGH. Histidine 41 serves as the catalytic Proton donor. 298–304 lines the substrate pocket; sequence TVTGRRR. GTP is bound by residues arginine 304, 330-332, and 412-414; these read KLD and STS.

Belongs to the adenylosuccinate synthetase family. In terms of assembly, homodimer. Mg(2+) is required as a cofactor.

It localises to the cytoplasm. It carries out the reaction IMP + L-aspartate + GTP = N(6)-(1,2-dicarboxyethyl)-AMP + GDP + phosphate + 2 H(+). The protein operates within purine metabolism; AMP biosynthesis via de novo pathway; AMP from IMP: step 1/2. Its function is as follows. Plays an important role in the de novo pathway of purine nucleotide biosynthesis. Catalyzes the first committed step in the biosynthesis of AMP from IMP. The polypeptide is Adenylosuccinate synthetase (Zymomonas mobilis subsp. mobilis (strain ATCC 31821 / ZM4 / CP4)).